The chain runs to 203 residues: Urease accessory protein UreG (203 aa).

A GTP-binding site is contributed by 14-21; that stretch reads GPVGSGKT.

Belongs to the SIMIBI class G3E GTPase family. UreG subfamily. As to quaternary structure, homodimer. UreD, UreF and UreG form a complex that acts as a GTP-hydrolysis-dependent molecular chaperone, activating the urease apoprotein by helping to assemble the nickel containing metallocenter of UreC. The UreE protein probably delivers the nickel.

The protein localises to the cytoplasm. Facilitates the functional incorporation of the urease nickel metallocenter. This process requires GTP hydrolysis, probably effectuated by UreG. The polypeptide is Urease accessory protein UreG (Rhizobium johnstonii (strain DSM 114642 / LMG 32736 / 3841) (Rhizobium leguminosarum bv. viciae)).